The sequence spans 424 residues: UPF0053 protein MG146 (424 aa).

The CNNM transmembrane domain maps to 6-191 (SGLTLTVIIL…EQNGLFSKED (186 aa)). 4 consecutive transmembrane segments (helical) span residues 7–27 (GLTL…STVV), 71–91 (LITI…ILFL), 101–121 (LLSS…FCEI), and 135–155 (LVLF…ITKL). CBS domains lie at 210–270 (MIKW…PKSL) and 272–332 (LNQL…IYDE).

Belongs to the UPF0053 family.

The protein localises to the cell membrane. In Mycoplasma genitalium (strain ATCC 33530 / DSM 19775 / NCTC 10195 / G37) (Mycoplasmoides genitalium), this protein is UPF0053 protein MG146.